A 152-amino-acid chain; its full sequence is Putative toxin MJ1304 (152 aa).

The region spanning 15–135 (IKRAEEDLEV…EECLKDAENV (121 aa)) is the HEPN domain.

Its function is as follows. Putative toxin component of a putative type VII toxin-antitoxin (TA) system. Its cognate antitoxin might be MJ1305. The polypeptide is Putative toxin MJ1304 (Methanocaldococcus jannaschii (strain ATCC 43067 / DSM 2661 / JAL-1 / JCM 10045 / NBRC 100440) (Methanococcus jannaschii)).